The following is a 122-amino-acid chain: Large ribosomal subunit protein uL14 (122 aa).

This sequence belongs to the universal ribosomal protein uL14 family. As to quaternary structure, part of the 50S ribosomal subunit. Forms a cluster with proteins L3 and L19. In the 70S ribosome, L14 and L19 interact and together make contacts with the 16S rRNA in bridges B5 and B8.

Binds to 23S rRNA. Forms part of two intersubunit bridges in the 70S ribosome. This Streptomyces coelicolor (strain ATCC BAA-471 / A3(2) / M145) protein is Large ribosomal subunit protein uL14.